Here is a 311-residue protein sequence, read N- to C-terminus: 4-hydroxy-3-methylbut-2-enyl diphosphate reductase (311 aa).

Residue Cys-12 participates in [4Fe-4S] cluster binding. (2E)-4-hydroxy-3-methylbut-2-enyl diphosphate contacts are provided by His-41 and His-74. The dimethylallyl diphosphate site is built by His-41 and His-74. The isopentenyl diphosphate site is built by His-41 and His-74. Cys-96 contacts [4Fe-4S] cluster. A (2E)-4-hydroxy-3-methylbut-2-enyl diphosphate-binding site is contributed by His-124. His-124 is a binding site for dimethylallyl diphosphate. Position 124 (His-124) interacts with isopentenyl diphosphate. Residue Glu-126 is the Proton donor of the active site. Thr-168 contacts (2E)-4-hydroxy-3-methylbut-2-enyl diphosphate. Residue Cys-198 participates in [4Fe-4S] cluster binding. Residues Ser-226, Ser-227, Asn-228, and Ser-270 each contribute to the (2E)-4-hydroxy-3-methylbut-2-enyl diphosphate site. Dimethylallyl diphosphate-binding residues include Ser-226, Ser-227, Asn-228, and Ser-270. Ser-226, Ser-227, Asn-228, and Ser-270 together coordinate isopentenyl diphosphate.

The protein belongs to the IspH family. It depends on [4Fe-4S] cluster as a cofactor.

It catalyses the reaction isopentenyl diphosphate + 2 oxidized [2Fe-2S]-[ferredoxin] + H2O = (2E)-4-hydroxy-3-methylbut-2-enyl diphosphate + 2 reduced [2Fe-2S]-[ferredoxin] + 2 H(+). It carries out the reaction dimethylallyl diphosphate + 2 oxidized [2Fe-2S]-[ferredoxin] + H2O = (2E)-4-hydroxy-3-methylbut-2-enyl diphosphate + 2 reduced [2Fe-2S]-[ferredoxin] + 2 H(+). The protein operates within isoprenoid biosynthesis; dimethylallyl diphosphate biosynthesis; dimethylallyl diphosphate from (2E)-4-hydroxy-3-methylbutenyl diphosphate: step 1/1. It functions in the pathway isoprenoid biosynthesis; isopentenyl diphosphate biosynthesis via DXP pathway; isopentenyl diphosphate from 1-deoxy-D-xylulose 5-phosphate: step 6/6. Catalyzes the conversion of 1-hydroxy-2-methyl-2-(E)-butenyl 4-diphosphate (HMBPP) into a mixture of isopentenyl diphosphate (IPP) and dimethylallyl diphosphate (DMAPP). Acts in the terminal step of the DOXP/MEP pathway for isoprenoid precursor biosynthesis. In Saccharophagus degradans (strain 2-40 / ATCC 43961 / DSM 17024), this protein is 4-hydroxy-3-methylbut-2-enyl diphosphate reductase.